Here is a 62-residue protein sequence, read N- to C-terminus: Ribulose bisphosphate carboxylase/oxygenase activase, chloroplastic (62 aa).

The protein belongs to the RuBisCO activase family.

It localises to the plastid. It is found in the chloroplast stroma. Functionally, activation of RuBisCO (ribulose-1,5-bisphosphate carboxylase/oxygenase; EC 4.1.1.39) involves the ATP-dependent carboxylation of the epsilon-amino group of lysine leading to a carbamate structure. The polypeptide is Ribulose bisphosphate carboxylase/oxygenase activase, chloroplastic (Vitis sp. (Grape)).